The following is a 40-amino-acid chain: Photosystem II reaction center protein J (40 aa).

A helical membrane pass occupies residues isoleucine 8–phenylalanine 28.

It belongs to the PsbJ family. PSII is composed of 1 copy each of membrane proteins PsbA, PsbB, PsbC, PsbD, PsbE, PsbF, PsbH, PsbI, PsbJ, PsbK, PsbL, PsbM, PsbT, PsbX, PsbY, PsbZ, Psb30/Ycf12, at least 3 peripheral proteins of the oxygen-evolving complex and a large number of cofactors. It forms dimeric complexes.

Its subcellular location is the plastid. It is found in the chloroplast thylakoid membrane. Functionally, one of the components of the core complex of photosystem II (PSII). PSII is a light-driven water:plastoquinone oxidoreductase that uses light energy to abstract electrons from H(2)O, generating O(2) and a proton gradient subsequently used for ATP formation. It consists of a core antenna complex that captures photons, and an electron transfer chain that converts photonic excitation into a charge separation. In Oenothera elata subsp. hookeri (Hooker's evening primrose), this protein is Photosystem II reaction center protein J.